A 67-amino-acid chain; its full sequence is UPF0337 protein Atu4724 (67 aa).

It belongs to the UPF0337 (CsbD) family.

This chain is UPF0337 protein Atu4724, found in Agrobacterium fabrum (strain C58 / ATCC 33970) (Agrobacterium tumefaciens (strain C58)).